The sequence spans 277 residues: MTLKKSKPTSPGQRAVVRSVNSFLYKGNSYSALTEKKKKNSGRNNSGKITVRHIGGGHKHHYRIVDFCRNKDDIPAKVERIEYDPNRSAYLALLCYADGERKYIIAAKDIEVGSYVVNGSGSPVKTGNALPIRNIPVGSVIHCIELKPGKGAQLARSAGSSAQLMAREGDYSQIRLRSGEIRKIHINCRATIGEVGNSEHNLQSIGKAGAVRWRGIRPTVRGVAMNPVDHPHGGGEGKTAAGRHPVSPWGTPSKGSRTRRNKRTVNMIVRSRYSKKG.

Residues 223–264 (VAMNPVDHPHGGGEGKTAAGRHPVSPWGTPSKGSRTRRNKRT) are disordered.

The protein belongs to the universal ribosomal protein uL2 family. Part of the 50S ribosomal subunit. Forms a bridge to the 30S subunit in the 70S ribosome.

Its function is as follows. One of the primary rRNA binding proteins. Required for association of the 30S and 50S subunits to form the 70S ribosome, for tRNA binding and peptide bond formation. It has been suggested to have peptidyltransferase activity; this is somewhat controversial. Makes several contacts with the 16S rRNA in the 70S ribosome. This is Large ribosomal subunit protein uL2 from Nitrosomonas eutropha (strain DSM 101675 / C91 / Nm57).